The following is a 515-amino-acid chain: MPKKRRSRRRPQPIIRWVSLTLTLLALCRPIQTWRCSLSLGNQQWMTAYNQEAKFSISIDQILEAHNQSPFCAKSPRYTLDSVNGYPKIYWPPPQGRRRFGARAMVTYDCEPRCPYVGADRFDCPHWDNASQADQGSFYVNHQILFLHLKQCHGIFTLTWEIWGYDPLITFSLHKIPDPPQPDFPQLNSDWVPSVRSWALLLNQTARAFPDCAICWEPSPPWAPEILVYNKTISSSGPGLALPDAQIFWVNTSSFNTTQGWHHPSQRLLFNVSQGNALLLPPISLVNLSTASSAPPTRVRRSPVAALTLGLALSVGLTGINVAVSALSHQRLTSLIHVLEQDQQRLITAINQTHYNLLNVASVVAQNRRGLDWLYIRLGFQSLCPTINEPCCFLRIQNDSIIRLGDLQPLSQRVSTDWQWPWNWDLGLTAWVRETIHSVLSLFLLALFLLFLAPCLIKCLTSRLLKLLRQAPHFPEISLTPKPDSDYQALLPSAPEIYSHLSPVKPDYINLRPCP.

The signal sequence occupies residues methionine 1 to threonine 33. The Extracellular portion of the chain corresponds to tryptophan 34–threonine 435. N-linked (GlcNAc...) asparagine; by host glycans are attached at residues asparagine 129 and asparagine 203. Positions cysteine 212–cysteine 215 match the CXXC motif. Cystine bridges form between cysteine 212/cysteine 215, cysteine 212/cysteine 392, and cysteine 384/cysteine 391. 5 N-linked (GlcNAc...) asparagine; by host glycosylation sites follow: asparagine 230, asparagine 251, asparagine 256, asparagine 271, and asparagine 287. A fusion peptide region spans residues valine 304 to valine 324. Coiled-coil stretches lie at residues glutamine 330–isoleucine 376 and asparagine 388–tryptophan 420. A glycan (N-linked (GlcNAc...) asparagine; by host) is linked at asparagine 351. Positions alanine 365 to glutamine 381 are immunosuppression. A CX6CC motif is present at residues cysteine 384–cysteine 392. Asparagine 398 carries an N-linked (GlcNAc...) asparagine; by host glycan. The helical transmembrane segment at isoleucine 436 to leucine 456 threads the bilayer. Cysteine 455 carries the S-palmitoyl cysteine; by host lipid modification. At isoleucine 457–proline 515 the chain is on the cytoplasmic side.

In terms of assembly, the mature envelope protein (Env) consists of a trimer of SU-TM heterodimers attached by a labile interchain disulfide bond. Specific enzymatic cleavages in vivo yield mature proteins. Envelope glycoproteins are synthesized as an inactive precursor that is N-glycosylated and processed likely by host cell furin or by a furin-like protease in the Golgi to yield the mature SU and TM proteins. The cleavage site between SU and TM requires the minimal sequence [KR]-X-[KR]-R. In terms of processing, the CXXC motif is highly conserved across a broad range of retroviral envelope proteins. It is thought to participate in the formation of a labile disulfide bond possibly with the CX6CC motif present in the transmembrane protein. Isomerization of the intersubunit disulfide bond to an SU intrachain disulfide bond is thought to occur upon receptor recognition in order to allow membrane fusion. Post-translationally, the transmembrane protein is palmitoylated.

It is found in the virion membrane. The protein localises to the host cell membrane. In terms of biological role, the surface protein (SU) attaches the virus to the host cell by binding to its receptor. This interaction triggers the refolding of the transmembrane protein (TM) and is thought to activate its fusogenic potential by unmasking its fusion peptide. Fusion occurs at the host cell plasma membrane. The transmembrane protein (TM) acts as a class I viral fusion protein. Under the current model, the protein has at least 3 conformational states: pre-fusion native state, pre-hairpin intermediate state, and post-fusion hairpin state. During viral and target cell membrane fusion, the coiled coil regions (heptad repeats) assume a trimer-of-hairpins structure, positioning the fusion peptide in close proximity to the C-terminal region of the ectodomain. The formation of this structure appears to drive apposition and subsequent fusion of viral and target cell membranes. Membranes fusion leads to delivery of the nucleocapsid into the cytoplasm. The sequence is that of Envelope glycoprotein (env) from Bovine leukemia virus (isolate American FLK) (BLV).